The primary structure comprises 211 residues: MYQPDFPTVPFRLGLYPVVDSVAWIERLLEAGVRTIQLRIKDKRDEEVEADVIAAIALGRRYDARLFINDYWRLAIKHRAYGVHLGQEDLETTDLKAIQAAGLRLGVSTHDDMEIDVALAAKPSYIALGHVFPTQTKQMPSAPQGLAQLARHIDRLADYPTVAIGGISVERAPAVLATGVGSIAVVSAITQAADWRAATAQLLDIAGVGDE.

Residues 37–41 (QLRIK) and N69 each bind 4-amino-2-methyl-5-(diphosphooxymethyl)pyrimidine. Mg(2+) contacts are provided by D70 and D89. S108 contacts 4-amino-2-methyl-5-(diphosphooxymethyl)pyrimidine. 134 to 136 (TQT) contacts 2-[(2R,5Z)-2-carboxy-4-methylthiazol-5(2H)-ylidene]ethyl phosphate. K137 provides a ligand contact to 4-amino-2-methyl-5-(diphosphooxymethyl)pyrimidine. Residues G166 and 186–187 (VS) each bind 2-[(2R,5Z)-2-carboxy-4-methylthiazol-5(2H)-ylidene]ethyl phosphate.

It belongs to the thiamine-phosphate synthase family. Mg(2+) is required as a cofactor.

It carries out the reaction 2-[(2R,5Z)-2-carboxy-4-methylthiazol-5(2H)-ylidene]ethyl phosphate + 4-amino-2-methyl-5-(diphosphooxymethyl)pyrimidine + 2 H(+) = thiamine phosphate + CO2 + diphosphate. The enzyme catalyses 2-(2-carboxy-4-methylthiazol-5-yl)ethyl phosphate + 4-amino-2-methyl-5-(diphosphooxymethyl)pyrimidine + 2 H(+) = thiamine phosphate + CO2 + diphosphate. It catalyses the reaction 4-methyl-5-(2-phosphooxyethyl)-thiazole + 4-amino-2-methyl-5-(diphosphooxymethyl)pyrimidine + H(+) = thiamine phosphate + diphosphate. Its pathway is cofactor biosynthesis; thiamine diphosphate biosynthesis; thiamine phosphate from 4-amino-2-methyl-5-diphosphomethylpyrimidine and 4-methyl-5-(2-phosphoethyl)-thiazole: step 1/1. Condenses 4-methyl-5-(beta-hydroxyethyl)thiazole monophosphate (THZ-P) and 2-methyl-4-amino-5-hydroxymethyl pyrimidine pyrophosphate (HMP-PP) to form thiamine monophosphate (TMP). This is Thiamine-phosphate synthase from Salmonella newport (strain SL254).